The following is a 534-amino-acid chain: MRRHSETDVEEQTQELKTITQLQEQCRALQIQGVKENMDQNKATLALLRSNIRRGAQDWALAKKYDQWTISKACGKNLPLRLAHCRSTMEVVREKLRKYVFDRVNMHNLLIHLVRRRGQKLESMQLELDSLRSQPDASKEELRLLQIIRQLENNIEKTMIKIITSQNIHLLYLDLLDYLKTVLAGYPIELDKLQNLVVNYCSELSDMKIMSQDAMMITDEVKRNMRQREASFIEERRARENRLNQQKKLIDKIHTKETSEKYRRGQMDLDFPSNLMSTETLKLRRKETSTAEMEYQSGVTAVVEKVKSAVRCSHVWDITSRFLAQRNTEENLELQMEDCEEWRVQLKALVKQLELEEAVLKFRQKPSSISFKSVEKKMTDMLKEEEERLQLAHSNMTKGQELLLTIQMGIDNLYVRLMGINLPATQREVVLSNTLDLNSKLAYCEGKLTYLADRVQMVSRTEEGDTKVRDTLESSTLMEKYNTRISFENREEDMIDTFQFPDMDHSYVPSRAEIKRQAQRLIEGKLKAAKKKKK.

3 coiled-coil regions span residues 10–54, 136–209, and 323–396; these read EEQT…NIRR, DASK…DMKI, and LAQR…HSNM.

This Homo sapiens (Human) protein is Coiled-coil domain-containing protein 183 (CCDC183).